The following is a 222-amino-acid chain: GTP cyclohydrolase 1 (222 aa).

Residues C111, H114, and C182 each coordinate Zn(2+).

Belongs to the GTP cyclohydrolase I family. Toroid-shaped homodecamer, composed of two pentamers of five dimers.

It carries out the reaction GTP + H2O = 7,8-dihydroneopterin 3'-triphosphate + formate + H(+). It functions in the pathway cofactor biosynthesis; 7,8-dihydroneopterin triphosphate biosynthesis; 7,8-dihydroneopterin triphosphate from GTP: step 1/1. The protein is GTP cyclohydrolase 1 of Enterobacter sp. (strain 638).